Consider the following 394-residue polypeptide: Probable sugar efflux transporter (394 aa).

12 helical membrane-spanning segments follow: residues 15 to 35, 50 to 70, 79 to 99, 109 to 129, 137 to 157, 168 to 188, 209 to 229, 249 to 269, 272 to 292, 299 to 319, 333 to 353, and 362 to 382; these read VLML…PVGL, VGLM…PMML, MLLM…SVAW, IGIA…AIRV, QALS…LPIG, ITFA…LKLL, PALV…YTAY, FLLL…SIYG, FPAT…MCLY, LAVS…GLAV, VAMS…ALLG, and MASV…WCAW.

It belongs to the major facilitator superfamily. SotB (TC 2.A.1.2) family.

Its subcellular location is the cell inner membrane. In terms of biological role, involved in the efflux of sugars. The physiological role may be the reduction of the intracellular concentration of toxic sugars or sugar metabolites. The chain is Probable sugar efflux transporter from Erwinia tasmaniensis (strain DSM 17950 / CFBP 7177 / CIP 109463 / NCPPB 4357 / Et1/99).